A 528-amino-acid chain; its full sequence is GTPase Obg (528 aa).

Positions 2 to 159 (ASFVDRVVLH…SDIVLELKSI (158 aa)) constitute an Obg domain. Residues 160–343 (ADIALVGFPS…LGFAMAEIVQ (184 aa)) enclose the OBG-type G domain. GTP is bound by residues 166–173 (GFPSAGKS), 191–195 (FTTLI), 212–215 (DVPG), 295–298 (NKVD), and 324–326 (SAT). The Mg(2+) site is built by Ser-173 and Thr-193. The OCT domain maps to 363–447 (PRAVNESGFK…DDGVVFDWEP (85 aa)). Residues 471–490 (DRPTRSQKRDEQIERREAKA) form a disordered region.

The protein belongs to the TRAFAC class OBG-HflX-like GTPase superfamily. OBG GTPase family. As to quaternary structure, monomer. It depends on Mg(2+) as a cofactor.

The protein resides in the cytoplasm. Its function is as follows. An essential GTPase which binds GTP, GDP and possibly (p)ppGpp with moderate affinity, with high nucleotide exchange rates and a fairly low GTP hydrolysis rate. Plays a role in control of the cell cycle, stress response, ribosome biogenesis and in those bacteria that undergo differentiation, in morphogenesis control. This Paenarthrobacter aurescens (strain TC1) protein is GTPase Obg.